We begin with the raw amino-acid sequence, 206 residues long: 2,3-bisphosphoglycerate-dependent phosphoglycerate mutase (206 aa).

Substrate contacts are provided by residues 9 to 16, 22 to 23, arginine 61, 88 to 91, lysine 99, 115 to 116, and 159 to 160; these read RHGQSEWN, TG, ERDY, RR, and GN. Catalysis depends on histidine 10, which acts as the Tele-phosphohistidine intermediate. Glutamate 88 acts as the Proton donor/acceptor in catalysis.

This sequence belongs to the phosphoglycerate mutase family. BPG-dependent PGAM subfamily. Homodimer.

The enzyme catalyses (2R)-2-phosphoglycerate = (2R)-3-phosphoglycerate. It functions in the pathway carbohydrate degradation; glycolysis; pyruvate from D-glyceraldehyde 3-phosphate: step 3/5. Functionally, catalyzes the interconversion of 2-phosphoglycerate and 3-phosphoglycerate. In Brucella ovis (strain ATCC 25840 / 63/290 / NCTC 10512), this protein is 2,3-bisphosphoglycerate-dependent phosphoglycerate mutase.